The following is a 518-amino-acid chain: Cytochrome P450 monooxygenase atnE (518 aa).

The chain crosses the membrane as a helical span at residues 11–31 (FLAAFAVWMGVVVLAFAIFCV). The N-linked (GlcNAc...) asparagine glycan is linked to N184. C458 is a binding site for heme.

This sequence belongs to the cytochrome P450 family. Heme is required as a cofactor.

The protein resides in the membrane. It functions in the pathway secondary metabolite biosynthesis. Cytochrome P450 monooxygenase; part of the gene cluster that mediates the biosynthesis of aspercryptins, linear lipopeptides built from six amino acids including 2 highly unusual and nonproteogenic amino acids, 2-amino-octanoic acid (2aoa) and 2-amino-dodecanol (2adol). The core structure of aspercryptins is as follows: Ser/Ala-Thr-Ile/Val-2aoa-Asn-2adol. The first step of aspercryptin biosynthesis is the generation of the fatty acid precursors, octanoic and dodecanoic acids, by the FAS subunits atnF and atnM. The fatty acid precursors are likely transformed into the corresponding alpha-amino fatty acids in three steps. First, they are hydroxylated by the cytochrome P450 monooxygenase atnE, then oxidized to the corresponding alpha-keto acids by the NAD(P)-dependent oxidoreductase atnD, and finally converted to the alpha-amino fatty acids by the PLP-dependent aminotransferases atnH or atnJ. the alpha-amino fatty acids, 2-amino-octanoic and 2-amino-dodecanoic acids, are recognized, activated, and covalently tethered to the NRPS atnA by its fourth and sixth adenylation domains. The second module of atnA is the Thr module and contains an epimerase (E) domain responsible for the epimerization of Thr to D-allo-Thr. Additionally, despite atnA having only one epimerase domain, the first amino acid of aspercryptin A1 is D-Ser, suggesting that serine is either loaded directly as D-Ser on the first module or that the epimerase domain in the threonine module epimerizes both L-Ser and L-Thr. After condensation of the hexapeptide of aspercryptin, the C-terminal reductase (TE) domain might be involved in the reductive release and production of the aldehyde hexapeptide. Further reduction would generate aspercryptins. The variety of aspercryptins produced reflects the flexibility of the atnA NRPS, allowing incorporation of alanine instead of serine, valine for isoleucine, and a C10 fatty amino alcohol instead of the C12 version. AtnB seems to be involved in the selectivity for Ile versus Val by the third module. Moreover, type B, C and D aspercryptins have an additional N-terminal cichorine, acetyl and propionyl group respectively. The chain is Cytochrome P450 monooxygenase atnE from Emericella nidulans (strain FGSC A4 / ATCC 38163 / CBS 112.46 / NRRL 194 / M139) (Aspergillus nidulans).